We begin with the raw amino-acid sequence, 275 residues long: Serine/threonine-protein phosphatase PGAM5, mitochondrial (275 aa).

A helical membrane pass occupies residues 7-24 (LIAGGSAAAAILGVVAAG).

Belongs to the phosphoglycerate mutase family. BPG-dependent PGAM subfamily. Post-translationally, phosphorylated by the RIPK1/RIPK3 complex under necrotic conditions. This phosphorylation increases PGAM5 phosphatase activity.

The protein localises to the mitochondrion outer membrane. The enzyme catalyses O-phospho-L-seryl-[protein] + H2O = L-seryl-[protein] + phosphate. It carries out the reaction O-phospho-L-threonyl-[protein] + H2O = L-threonyl-[protein] + phosphate. Displays phosphatase activity for serine/threonine residues. Has apparently no phosphoglycerate mutase activity. May be regulator of mitochondrial dynamics. May be a central mediator for programmed necrosis. The protein is Serine/threonine-protein phosphatase PGAM5, mitochondrial (pgam5) of Xenopus laevis (African clawed frog).